Here is a 133-residue protein sequence, read N- to C-terminus: FPRL1 inhibitory protein (133 aa).

A signal peptide spans 1–28 (MKKNITKTIIASTVIAAGLLTQTNDAKA).

This sequence belongs to the CHIPS/FLIPr family.

The protein localises to the secreted. Its function is as follows. May be involved in countering the first line of host defense mechanisms. Impairs the leukocyte response to FPRL1 agonists by binding directly to host FPRL1. Exerts, in vitro, anti-inflammatory activity by inhibiting calcium mobilization and cell migration toward chemoattractants. This Staphylococcus aureus (strain Newman) protein is FPRL1 inhibitory protein (flr).